The sequence spans 574 residues: Sulfate adenylyltransferase (574 aa).

Residues 1–169 are N-terminal; it reads MSNPPHGGVL…VEAINKLNHY (169 aa). Positions 170 to 394 are catalytic; it reads DYVALRYTPA…LRESSRPRST (225 aa). Sulfate is bound at residue Q197. ATP is bound by residues 197–200 and 291–294; these read QTRN and GRDH. Catalysis depends on residues T198, R199, and N200. R199 is a binding site for sulfate. Residue A295 coordinates sulfate. V333 contacts ATP. The interval 395 to 574 is allosteric regulation domain; adenylyl-sulfate kinase-like; that stretch reads QGFTIFLTGY…LETEGFFDRA (180 aa). Residues 434-437, R451, 477-478, and R516 contribute to the 3'-phosphoadenylyl sulfate site; these read DTVR and IA.

In the N-terminal section; belongs to the sulfate adenylyltransferase family. The protein in the C-terminal section; belongs to the APS kinase family. In terms of assembly, homohexamer. Dimer of trimers.

It is found in the cytoplasm. It carries out the reaction sulfate + ATP + H(+) = adenosine 5'-phosphosulfate + diphosphate. It participates in sulfur metabolism; hydrogen sulfide biosynthesis; sulfite from sulfate: step 1/3. Allosterically inhibited by 3'-phosphoadenosine 5'-phosphosulfate (PAPS). Functionally, catalyzes the first intracellular reaction of sulfate assimilation, forming adenosine-5'-phosphosulfate (APS) from inorganic sulfate and ATP. Plays an important role in sulfate activation as a component of the biosynthesis pathway of sulfur-containing amino acids. This chain is Sulfate adenylyltransferase, found in Aspergillus clavatus (strain ATCC 1007 / CBS 513.65 / DSM 816 / NCTC 3887 / NRRL 1 / QM 1276 / 107).